Here is a 150-residue protein sequence, read N- to C-terminus: Large ribosomal subunit protein bL9 (150 aa).

The protein belongs to the bacterial ribosomal protein bL9 family.

Functionally, binds to the 23S rRNA. The polypeptide is Large ribosomal subunit protein bL9 (Vibrio parahaemolyticus serotype O3:K6 (strain RIMD 2210633)).